The following is a 333-amino-acid chain: Acetyltransferase Pat (333 aa).

3',5'-cyclic AMP-binding positions include glycine 85–alanine 88, arginine 95–threonine 96, and arginine 135. The N-acetyltransferase domain occupies phenylalanine 153–isoleucine 317. Residue glutamate 211 participates in Mg(2+) binding. Residues phenylalanine 237–valine 239, glycine 245–serine 250, asparagine 276, and arginine 285 each bind substrate.

Homodimer. Requires Mg(2+) as cofactor.

Its activity is regulated as follows. Allosterically regulated by cAMP. In terms of biological role, catalyzes specifically the acetylation of the epsilon-amino group of a highly conserved lysine residue in acetyl-CoA synthetase (ACS) and of the universal stress protein (USP) MSMEG_4207. Acetylation results in the inactivation of ACS activity and could be important for mycobacteria to adjust to environmental changes. This Mycolicibacterium smegmatis (strain ATCC 700084 / mc(2)155) (Mycobacterium smegmatis) protein is Acetyltransferase Pat.